Reading from the N-terminus, the 627-residue chain is DNA-directed RNA polymerase subunit gamma (627 aa).

Zn(2+) is bound by residues cysteine 70, cysteine 72, cysteine 85, and cysteine 88. 3 residues coordinate Mg(2+): aspartate 468, aspartate 470, and aspartate 472.

The protein belongs to the RNA polymerase beta' chain family. RpoC1 subfamily. In terms of assembly, in cyanobacteria the RNAP catalytic core is composed of 2 alpha, 1 beta, 1 beta', 1 gamma and 1 omega subunit. When a sigma factor is associated with the core the holoenzyme is formed, which can initiate transcription. It depends on Mg(2+) as a cofactor. Requires Zn(2+) as cofactor.

The catalysed reaction is RNA(n) + a ribonucleoside 5'-triphosphate = RNA(n+1) + diphosphate. Functionally, DNA-dependent RNA polymerase catalyzes the transcription of DNA into RNA using the four ribonucleoside triphosphates as substrates. The polypeptide is DNA-directed RNA polymerase subunit gamma (Synechococcus sp. (strain JA-2-3B'a(2-13)) (Cyanobacteria bacterium Yellowstone B-Prime)).